The following is a 385-amino-acid chain: G2/mitotic-specific cyclin-B3 (385 aa).

Polar residues predominate over residues 1–16 (MMLRSQAKNVDLTSQA). Disordered stretches follow at residues 1–48 (MMLR…HSKG) and 63–88 (SAKR…QKSR). Basic and acidic residues-rich tracts occupy residues 17–28 (DSRHQQKRKQAE) and 63–80 (SAKR…RDVE).

It belongs to the cyclin family. Cyclin AB subfamily.

Its subcellular location is the nucleus. In terms of biological role, could be involved at the G2/M (mitosis) transition. Interacts with the CDK1 and CDK2 protein kinases. G2/M cyclins accumulate steadily during G2 and are abruptly destroyed at mitosis. Plays a role during oocyte meiosis II. The polypeptide is G2/mitotic-specific cyclin-B3 (cyb-3) (Caenorhabditis elegans).